An 89-amino-acid chain; its full sequence is Small ribosomal subunit protein bS20 (89 aa).

A disordered region spans residues 1–26; the sequence is MANSAQARKRARQADGQRSHNASLRS.

Belongs to the bacterial ribosomal protein bS20 family.

Binds directly to 16S ribosomal RNA. The chain is Small ribosomal subunit protein bS20 from Dechloromonas aromatica (strain RCB).